Consider the following 215-residue polypeptide: Cytochrome b6 (215 aa).

A helical transmembrane segment spans residues 32 to 52 (IFYCLGGITLTCFLVQVATGF). Cys-35 serves as a coordination point for heme c. The heme b site is built by His-86 and His-100. A run of 3 helical transmembrane segments spans residues 90 to 110 (ASMMVLMMILHVFRVYLTGGF), 116 to 136 (LTWVTGVVLGVLTASFGVTGY), and 186 to 206 (LHTFVLPLLTAVFMLMHFPMI). Positions 187 and 202 each coordinate heme b.

Belongs to the cytochrome b family. PetB subfamily. The 4 large subunits of the cytochrome b6-f complex are cytochrome b6, subunit IV (17 kDa polypeptide, PetD), cytochrome f and the Rieske protein, while the 4 small subunits are PetG, PetL, PetM and PetN. The complex functions as a dimer. It depends on heme b as a cofactor. Requires heme c as cofactor.

The protein localises to the plastid. The protein resides in the chloroplast thylakoid membrane. Functionally, component of the cytochrome b6-f complex, which mediates electron transfer between photosystem II (PSII) and photosystem I (PSI), cyclic electron flow around PSI, and state transitions. The polypeptide is Cytochrome b6 (Vitis vinifera (Grape)).